The primary structure comprises 327 residues: Malate dehydrogenase (327 aa).

11–17 (GAAGQIA) contacts NAD(+). The substrate site is built by arginine 92 and arginine 98. NAD(+) contacts are provided by residues asparagine 105, glutamine 112, and 128–130 (VGN). Substrate-binding residues include asparagine 130 and arginine 160. The active-site Proton acceptor is the histidine 185.

Belongs to the LDH/MDH superfamily. MDH type 2 family.

It carries out the reaction (S)-malate + NAD(+) = oxaloacetate + NADH + H(+). Its function is as follows. Catalyzes the reversible oxidation of malate to oxaloacetate. This is Malate dehydrogenase from Magnetococcus marinus (strain ATCC BAA-1437 / JCM 17883 / MC-1).